Here is a 534-residue protein sequence, read N- to C-terminus: Protein FAM83D (534 aa).

2 disordered regions span residues 320-372 (TPPS…STLG) and 501-534 (GLNR…RGLQ). The span at 329 to 342 (TKPQAERLTSTPAR) shows a compositional bias: polar residues. Basic and acidic residues predominate over residues 350–362 (RMNKDIEEPDRKS). Polar residues predominate over residues 511-520 (EARQPNTNID).

Belongs to the FAM83 family.

The protein resides in the cytoplasm. Its subcellular location is the cytoskeleton. It localises to the spindle. The protein localises to the spindle pole. Its function is as follows. May regulate cell proliferation, growth, migration and epithelial to mesenchymal transition. May also be important for proper chromosome congression and alignment during mitosis. The sequence is that of Protein FAM83D from Danio rerio (Zebrafish).